The following is an 806-amino-acid chain: Zygotic DNA replication licensing factor mcm3 (806 aa).

Positions 295 to 502 (VFEQLSRSLA…HDREISDHVL (208 aa)) constitute an MCM domain. 345-352 (GDPSVAKS) serves as a coordination point for ATP. The short motif at 477 to 480 (SRFD) is the Arginine finger element. The disordered stretch occupies residues 662–738 (KKRRRREGES…TDSSAKPGLS (77 aa)). The span at 693–702 (AQDGESHDPY) shows a compositional bias: basic and acidic residues.

Belongs to the MCM family. Component of the mcm2-7 complex (RLF-M). The complex forms a toroidal hexameric ring with the proposed subunit order mcm2-mcm6-mcm4-mcm7-mcm3-mcm5. Begins to associate with zmcm6 into mcm complexes at the neurula stage. Component of the CMG helicase complex, composed of the mcm2-7 complex, the GINS complex and cdc45.

The protein localises to the nucleus. It localises to the chromosome. The enzyme catalyses ATP + H2O = ADP + phosphate + H(+). Functionally, acts as a component of the mcm2-7 complex (mcm complex) which is the putative replicative helicase essential for 'once per cell cycle' DNA replication initiation and elongation in eukaryotic cells. The active ATPase sites in the mcm2-7 ring are formed through the interaction surfaces of two neighboring subunits such that a critical structure of a conserved arginine finger motif is provided in trans relative to the ATP-binding site of the Walker A box of the adjacent subunit. The six ATPase active sites, however, are likely to contribute differentially to the complex helicase activity. The existence of maternal and zygotic forms of mcm3 and mcm6 suggests that specific forms of mcm2-7 complexes may be used during different stages of development. This chain is Zygotic DNA replication licensing factor mcm3, found in Xenopus laevis (African clawed frog).